A 335-amino-acid chain; its full sequence is Phenylalanine--tRNA ligase alpha subunit (335 aa).

Glu-262 lines the Mg(2+) pocket.

This sequence belongs to the class-II aminoacyl-tRNA synthetase family. Phe-tRNA synthetase alpha subunit type 1 subfamily. In terms of assembly, tetramer of two alpha and two beta subunits. Requires Mg(2+) as cofactor.

The protein resides in the cytoplasm. It carries out the reaction tRNA(Phe) + L-phenylalanine + ATP = L-phenylalanyl-tRNA(Phe) + AMP + diphosphate + H(+). The polypeptide is Phenylalanine--tRNA ligase alpha subunit (Prochlorococcus marinus (strain MIT 9313)).